The sequence spans 158 residues: Ribosome maturation factor RimP (158 aa).

The protein belongs to the RimP family.

The protein resides in the cytoplasm. Functionally, required for maturation of 30S ribosomal subunits. The sequence is that of Ribosome maturation factor RimP from Pseudomonas savastanoi pv. phaseolicola (strain 1448A / Race 6) (Pseudomonas syringae pv. phaseolicola (strain 1448A / Race 6)).